Here is a 732-residue protein sequence, read N- to C-terminus: Probable boron transporter 3 (732 aa).

M1 carries the post-translational modification N-acetylmethionine. The Cytoplasmic portion of the chain corresponds to 1–37 (MDEAESFVPFQGIKKDVKGRLNCYKQDWISGLRAGFR). A helical transmembrane segment spans residues 38-58 (ILAPTTYIFFASAIPVITFGE). The Extracellular segment spans residues 59 to 77 (QLERDTDGKITAVQTLVST). The helical transmembrane segment at 78–98 (ALCGVIHSIIGGQPLLILGVA) threads the bilayer. Topologically, residues 99 to 123 (EPTVIMYTFMFNFAKSRTDLGSNLF) are cytoplasmic. A helical membrane pass occupies residues 124–144 (LAWTGWVCLWTGLLLFLLAVL). At 145–157 (GACTFINRFTRLA) the chain is on the extracellular side. The helical transmembrane segment at 158-178 (GELFGILIAMLFMQEAIRGIV) threads the bilayer. The Cytoplasmic portion of the chain corresponds to 179–197 (DEFGVPGRTNPRSAEFQPA). A helical transmembrane segment spans residues 198-218 (WVFANGMFGLVLSSGLLYTGL). The Extracellular segment spans residues 219-234 (KSRKARSWRFGAEWLR). The helical transmembrane segment at 235 to 255 (GFIADYGVPVMVVVWTCISYI) threads the bilayer. The Cytoplasmic segment spans residues 256 to 291 (PWKSVPQGIPRRLVSPNPWSPGAYQNWTVIKEMVDV). A helical membrane pass occupies residues 292-312 (PVLYILLAVVPASMIAVLYYF). Residues 313–339 (DHSVASQLAQQEDFNLRKPPAYHYDLF) are Extracellular-facing. A helical membrane pass occupies residues 340 to 360 (LLGFLTILCGLIGIPPSNGVI). Residues 361 to 463 (PQSPMHTKSL…ILPVEVKEQR (103 aa)) lie on the Cytoplasmic side of the membrane. A helical membrane pass occupies residues 464-484 (VSNFLQAMMVAGCVAAMPLIK). The Extracellular segment spans residues 485–556 (RIPSSVLWGY…LFQTAYLLVC (72 aa)). Residues 557–577 (FGITWVPVAGVLFPLMIMFLV) form a helical membrane-spanning segment. The Cytoplasmic portion of the chain corresponds to 578 to 732 (PVRQYVLPNF…QRLSNLGKSV (155 aa)). The tract at residues 695–732 (GGGEISPRSSAGRAPFSPRSATGGGGGEQRLSNLGKSV) is disordered.

Belongs to the anion exchanger (TC 2.A.31.3) family.

It is found in the membrane. Functionally, probable boron transporter. Boron is essential for maintaining the integrity of plants cell walls. The sequence is that of Probable boron transporter 3 (BOR3) from Arabidopsis thaliana (Mouse-ear cress).